The following is a 188-amino-acid chain: Protein GrpE (188 aa).

The segment at 1–22 (MADEQTLDTQNLDANQAPEASG) is disordered.

Belongs to the GrpE family. In terms of assembly, homodimer.

It localises to the cytoplasm. In terms of biological role, participates actively in the response to hyperosmotic and heat shock by preventing the aggregation of stress-denatured proteins, in association with DnaK and GrpE. It is the nucleotide exchange factor for DnaK and may function as a thermosensor. Unfolded proteins bind initially to DnaJ; upon interaction with the DnaJ-bound protein, DnaK hydrolyzes its bound ATP, resulting in the formation of a stable complex. GrpE releases ADP from DnaK; ATP binding to DnaK triggers the release of the substrate protein, thus completing the reaction cycle. Several rounds of ATP-dependent interactions between DnaJ, DnaK and GrpE are required for fully efficient folding. The sequence is that of Protein GrpE from Pseudomonas fluorescens (strain ATCC BAA-477 / NRRL B-23932 / Pf-5).